A 426-amino-acid chain; its full sequence is Serine hydroxymethyltransferase 1 (426 aa).

(6S)-5,6,7,8-tetrahydrofolate is bound by residues Leu-118 and 122-124 (GHL). Lys-227 carries the N6-(pyridoxal phosphate)lysine modification.

This sequence belongs to the SHMT family. Homodimer. Pyridoxal 5'-phosphate serves as cofactor.

It localises to the cytoplasm. It catalyses the reaction (6R)-5,10-methylene-5,6,7,8-tetrahydrofolate + glycine + H2O = (6S)-5,6,7,8-tetrahydrofolate + L-serine. The protein operates within one-carbon metabolism; tetrahydrofolate interconversion. It participates in amino-acid biosynthesis; glycine biosynthesis; glycine from L-serine: step 1/1. In terms of biological role, catalyzes the reversible interconversion of serine and glycine with tetrahydrofolate (THF) serving as the one-carbon carrier. This reaction serves as the major source of one-carbon groups required for the biosynthesis of purines, thymidylate, methionine, and other important biomolecules. Also exhibits THF-independent aldolase activity toward beta-hydroxyamino acids, producing glycine and aldehydes, via a retro-aldol mechanism. This is Serine hydroxymethyltransferase 1 from Mycobacterium bovis (strain ATCC BAA-935 / AF2122/97).